Reading from the N-terminus, the 127-residue chain is Anti-adapter protein IraD (127 aa).

This sequence belongs to the GpW/Gp25 family. IraD subfamily. In terms of assembly, interacts with RssB.

Its subcellular location is the cytoplasm. Its function is as follows. Inhibits RpoS proteolysis by regulating RssB activity, thereby increasing the stability of the sigma stress factor RpoS during oxidative stress. Its effect on RpoS stability is due to its interaction with RssB, which probably blocks the interaction of RssB with RpoS, and the consequent delivery of the RssB-RpoS complex to the ClpXP protein degradation pathway. The sequence is that of Anti-adapter protein IraD from Escherichia coli O6:K15:H31 (strain 536 / UPEC).